Reading from the N-terminus, the 151-residue chain is Mating pheromone 3 (151 aa).

The N-terminal stretch at 1–16 (MKAIFIILAILMVTQA) is a signal peptide. A propeptide spanning residues 17 to 52 (FKMTSKVNTKLQSQIQSKFQSKNKLASTFQTSSQLK) is cleaved from the precursor.

The protein resides in the secreted. Its function is as follows. Mating ciliate pheromones (or gamones) are diffusible extracellular communication signals that distinguish different intraspecific classes of cells commonly referred to as 'mating types'. They prepare the latter for conjugation by changing their cell surface properties. The sequence is that of Mating pheromone 3 (PHR3) from Euplotoides octocarinatus (Freshwater ciliate).